The primary structure comprises 171 residues: Interleukin-26 (171 aa).

Positions 1–21 (MLVNFILRCGLLLVTLSLAIA) are cleaved as a signal peptide.

This sequence belongs to the IL-10 family. Homodimer. In terms of tissue distribution, expressed in HVS transformed T-cells but not other T-cell lines or primary stimulated T-cells. Expressed in colonic T-cells including Th17 inflammatory T-cells; the expression is significantly increased in serum of patients with Crohn's disease (at protein level).

The protein localises to the secreted. Its function is as follows. May play a role in local mechanisms of mucosal immunity and seems to have a pro-inflammatory function. May play a role in inflammatory bowel disease. Activates STAT1 and STAT3, MAPK1/3 (ERK1/2), JUN and AKT. Induces expression of SOCS3, TNF-alpha and IL-8, secretion of IL-8 and IL-10 and surface expression of ICAM1. Decreases proliferation of intestinal epithelial cells. Is inhibited by heparin. The polypeptide is Interleukin-26 (IL26) (Homo sapiens (Human)).